The chain runs to 88 residues: Phosphoribosyl-ATP pyrophosphatase (88 aa).

The protein belongs to the PRA-PH family.

It is found in the cytoplasm. It catalyses the reaction 1-(5-phospho-beta-D-ribosyl)-ATP + H2O = 1-(5-phospho-beta-D-ribosyl)-5'-AMP + diphosphate + H(+). Its pathway is amino-acid biosynthesis; L-histidine biosynthesis; L-histidine from 5-phospho-alpha-D-ribose 1-diphosphate: step 2/9. In Cutibacterium acnes (strain DSM 16379 / KPA171202) (Propionibacterium acnes), this protein is Phosphoribosyl-ATP pyrophosphatase.